The chain runs to 329 residues: Holliday junction branch migration complex subunit RuvB (329 aa).

The segment at 1–180 is large ATPase domain (RuvB-L); sequence MKNILQSTEC…FGIPIHLEFY (180 aa). ATP-binding positions include R20, G61, K64, T65, T66, 127 to 129, R170, Y180, and R217; that span reads EDF. T65 is a binding site for Mg(2+). The segment at 181–252 is small ATPAse domain (RuvB-S); that stretch reads STEELTKVIQ…FADKALLRLG (72 aa). Residues 255–329 are head domain (RuvB-H); it reads KLGLDRQDIQ…ISHLREQEYI (75 aa). DNA-binding residues include R308 and R313.

This sequence belongs to the RuvB family. Homohexamer. Forms an RuvA(8)-RuvB(12)-Holliday junction (HJ) complex. HJ DNA is sandwiched between 2 RuvA tetramers; dsDNA enters through RuvA and exits via RuvB. An RuvB hexamer assembles on each DNA strand where it exits the tetramer. Each RuvB hexamer is contacted by two RuvA subunits (via domain III) on 2 adjacent RuvB subunits; this complex drives branch migration. In the full resolvosome a probable DNA-RuvA(4)-RuvB(12)-RuvC(2) complex forms which resolves the HJ.

Its subcellular location is the cytoplasm. The catalysed reaction is ATP + H2O = ADP + phosphate + H(+). Functionally, the RuvA-RuvB-RuvC complex processes Holliday junction (HJ) DNA during genetic recombination and DNA repair, while the RuvA-RuvB complex plays an important role in the rescue of blocked DNA replication forks via replication fork reversal (RFR). RuvA specifically binds to HJ cruciform DNA, conferring on it an open structure. The RuvB hexamer acts as an ATP-dependent pump, pulling dsDNA into and through the RuvAB complex. RuvB forms 2 homohexamers on either side of HJ DNA bound by 1 or 2 RuvA tetramers; 4 subunits per hexamer contact DNA at a time. Coordinated motions by a converter formed by DNA-disengaged RuvB subunits stimulates ATP hydrolysis and nucleotide exchange. Immobilization of the converter enables RuvB to convert the ATP-contained energy into a lever motion, pulling 2 nucleotides of DNA out of the RuvA tetramer per ATP hydrolyzed, thus driving DNA branch migration. The RuvB motors rotate together with the DNA substrate, which together with the progressing nucleotide cycle form the mechanistic basis for DNA recombination by continuous HJ branch migration. Branch migration allows RuvC to scan DNA until it finds its consensus sequence, where it cleaves and resolves cruciform DNA. The chain is Holliday junction branch migration complex subunit RuvB from Ehrlichia chaffeensis (strain ATCC CRL-10679 / Arkansas).